A 417-amino-acid polypeptide reads, in one-letter code: Glutamate-1-semialdehyde 2,1-aminomutase (417 aa).

Lys267 bears the N6-(pyridoxal phosphate)lysine mark.

This sequence belongs to the class-III pyridoxal-phosphate-dependent aminotransferase family. HemL subfamily. Homodimer. It depends on pyridoxal 5'-phosphate as a cofactor.

It localises to the cytoplasm. The enzyme catalyses (S)-4-amino-5-oxopentanoate = 5-aminolevulinate. The protein operates within porphyrin-containing compound metabolism; protoporphyrin-IX biosynthesis; 5-aminolevulinate from L-glutamyl-tRNA(Glu): step 2/2. In Solibacter usitatus (strain Ellin6076), this protein is Glutamate-1-semialdehyde 2,1-aminomutase.